Consider the following 347-residue polypeptide: NADH-ubiquinone oxidoreductase chain 2 (347 aa).

10 helical membrane passes run 1 to 21 (MNPL…AIVA), 25 to 45 (HWLM…PILM), 59 to 79 (YFLT…MNLV), 111 to 131 (FHFW…LILL), 149 to 169 (INLD…GWGG), 178 to 198 (IMAY…TYNP), 201 to 221 (TLLN…MFML), 237 to 257 (MPLL…LPPL), 274 to 294 (NSVI…YFYM), and 326 to 346 (LSPL…LALL).

This sequence belongs to the complex I subunit 2 family. In terms of assembly, core subunit of respiratory chain NADH dehydrogenase (Complex I) which is composed of 45 different subunits. Interacts with TMEM242.

It is found in the mitochondrion inner membrane. The catalysed reaction is a ubiquinone + NADH + 5 H(+)(in) = a ubiquinol + NAD(+) + 4 H(+)(out). In terms of biological role, core subunit of the mitochondrial membrane respiratory chain NADH dehydrogenase (Complex I) which catalyzes electron transfer from NADH through the respiratory chain, using ubiquinone as an electron acceptor. Essential for the catalytic activity and assembly of complex I. The sequence is that of NADH-ubiquinone oxidoreductase chain 2 from Pteropus rodricensis (Rodriguez flying fox).